The chain runs to 31 residues: MLTITSYFGFLLAVLTITSALFIGLNKIRLI.

A helical membrane pass occupies residues 4-24; it reads ITSYFGFLLAVLTITSALFIG.

This sequence belongs to the PetL family. As to quaternary structure, the 4 large subunits of the cytochrome b6-f complex are cytochrome b6, subunit IV (17 kDa polypeptide, PetD), cytochrome f and the Rieske protein, while the 4 small subunits are PetG, PetL, PetM and PetN. The complex functions as a dimer.

It localises to the plastid. Its subcellular location is the chloroplast thylakoid membrane. In terms of biological role, component of the cytochrome b6-f complex, which mediates electron transfer between photosystem II (PSII) and photosystem I (PSI), cyclic electron flow around PSI, and state transitions. PetL is important for photoautotrophic growth as well as for electron transfer efficiency and stability of the cytochrome b6-f complex. This chain is Cytochrome b6-f complex subunit 6, found in Cucumis sativus (Cucumber).